The chain runs to 265 residues: Flavin-dependent thymidylate synthase (265 aa).

A ThyX domain is found at 11-224 (GFLKLIDFMG…PIAFNSFENH (214 aa)). FAD contacts are provided by residues serine 56, 79–81 (RHR), and glutamate 87. 76–79 (QWMR) is a dUMP binding site. Positions 79–89 (RHRTARINEVS) match the ThyX motif motif. Arginine 155 is a dUMP binding site. FAD-binding positions include 171–173 (DLN) and histidine 177. DUMP is bound at residue arginine 182. The active-site Involved in ionization of N3 of dUMP, leading to its activation is arginine 182.

It belongs to the thymidylate synthase ThyX family. As to quaternary structure, homotetramer. The cofactor is FAD.

It carries out the reaction dUMP + (6R)-5,10-methylene-5,6,7,8-tetrahydrofolate + NADPH + H(+) = dTMP + (6S)-5,6,7,8-tetrahydrofolate + NADP(+). Its pathway is pyrimidine metabolism; dTTP biosynthesis. In terms of biological role, catalyzes the reductive methylation of 2'-deoxyuridine-5'-monophosphate (dUMP) to 2'-deoxythymidine-5'-monophosphate (dTMP) while utilizing 5,10-methylenetetrahydrofolate (mTHF) as the methyl donor, and NADPH and FADH(2) as the reductant. The protein is Flavin-dependent thymidylate synthase of Borreliella burgdorferi (strain ATCC 35210 / DSM 4680 / CIP 102532 / B31) (Borrelia burgdorferi).